The following is a 231-amino-acid chain: Potassium/proton antiporter CemA (231 aa).

4 helical membrane-spanning segments follow: residues F7–F27, I104–S124, I154–I174, and I189–I209.

It belongs to the CemA family.

It localises to the plastid. It is found in the chloroplast inner membrane. It catalyses the reaction K(+)(in) + H(+)(out) = K(+)(out) + H(+)(in). Its function is as follows. Contributes to K(+)/H(+) antiport activity by supporting proton efflux to control proton extrusion and homeostasis in chloroplasts in a light-dependent manner to modulate photosynthesis. Prevents excessive induction of non-photochemical quenching (NPQ) under continuous-light conditions. Indirectly promotes efficient inorganic carbon uptake into chloroplasts. This is Potassium/proton antiporter CemA from Pisum sativum (Garden pea).